Here is a 461-residue protein sequence, read N- to C-terminus: SWM histone demethylase complex subunit phf1 (461 aa).

Positions 79 to 130 are disordered; sequence PYGGMTMPASSSSGATSVPPEQDPSLSVSFNRLPKSASTKTKNGRIRSSRRE. The segment covering 102–119 has biased composition (polar residues); sequence PSLSVSFNRLPKSASTKT. The segment at 190-246 adopts a PHD-type zinc-finger fold; the sequence is VTLCSVCQRGHSPLSNRIVFCDGCNSPYHQLCHHPPIDDATVQDVDAEWFCMKCQYR.

As to quaternary structure, component of the SWM histone demethylase complex composed of at least lsd1, lsd2, phf1 and phf2.

It is found in the nucleus. Functionally, component of the SWM histone demethylase complex that specifically demethylates H3K9me2, a specific tag for epigenetic transcriptional activation, thereby acting as a corepressor. Has a role in regulating heterochromatin propagation and euchromatic transcription. The sequence is that of SWM histone demethylase complex subunit phf1 (phf1) from Schizosaccharomyces pombe (strain 972 / ATCC 24843) (Fission yeast).